Reading from the N-terminus, the 510-residue chain is Lysine--tRNA ligase (510 aa).

Mg(2+)-binding residues include glutamate 420 and glutamate 427.

Belongs to the class-II aminoacyl-tRNA synthetase family. Homodimer. Mg(2+) is required as a cofactor.

The protein localises to the cytoplasm. The enzyme catalyses tRNA(Lys) + L-lysine + ATP = L-lysyl-tRNA(Lys) + AMP + diphosphate. This chain is Lysine--tRNA ligase, found in Psychrobacter sp. (strain PRwf-1).